The primary structure comprises 415 residues: L-threonine dehydratase biosynthetic IlvA (415 aa).

The residue at position 53 (Lys53) is an N6-(pyridoxal phosphate)lysine. Pyridoxal 5'-phosphate contacts are provided by residues Asn80, 183–187, and Ser308; that span reads GGGGL. Residues 332-406 enclose the ACT-like domain; the sequence is HYFIIQFPQR…KGFEYREINK (75 aa).

It belongs to the serine/threonine dehydratase family. In terms of assembly, homotetramer. Pyridoxal 5'-phosphate is required as a cofactor.

The enzyme catalyses L-threonine = 2-oxobutanoate + NH4(+). The protein operates within amino-acid biosynthesis; L-isoleucine biosynthesis; 2-oxobutanoate from L-threonine: step 1/1. Catalyzes the anaerobic formation of alpha-ketobutyrate and ammonia from threonine in a two-step reaction. The first step involved a dehydration of threonine and a production of enamine intermediates (aminocrotonate), which tautomerizes to its imine form (iminobutyrate). Both intermediates are unstable and short-lived. The second step is the nonenzymatic hydrolysis of the enamine/imine intermediates to form 2-ketobutyrate and free ammonia. In the low water environment of the cell, the second step is accelerated by RidA. In Halalkalibacterium halodurans (strain ATCC BAA-125 / DSM 18197 / FERM 7344 / JCM 9153 / C-125) (Bacillus halodurans), this protein is L-threonine dehydratase biosynthetic IlvA (ilvA).